A 286-amino-acid polypeptide reads, in one-letter code: Shikimate dehydrogenase (NADP(+)) (286 aa).

Residues 20–22 (SLS) and Ser-67 each bind shikimate. The active-site Proton acceptor is the Lys-71. Residues Asn-92 and Asp-107 each contribute to the shikimate site. NADP(+) contacts are provided by residues 131-135 (GGGGA) and Ala-230. Tyr-232 lines the shikimate pocket. Gly-253 contacts NADP(+).

This sequence belongs to the shikimate dehydrogenase family. As to quaternary structure, homodimer.

It carries out the reaction shikimate + NADP(+) = 3-dehydroshikimate + NADPH + H(+). It participates in metabolic intermediate biosynthesis; chorismate biosynthesis; chorismate from D-erythrose 4-phosphate and phosphoenolpyruvate: step 4/7. Its function is as follows. Involved in the biosynthesis of the chorismate, which leads to the biosynthesis of aromatic amino acids. Catalyzes the reversible NADPH linked reduction of 3-dehydroshikimate (DHSA) to yield shikimate (SA). In Lactococcus lactis subsp. cremoris (strain SK11), this protein is Shikimate dehydrogenase (NADP(+)).